The following is a 254-amino-acid chain: Proteasome subunit alpha type-7 (254 aa).

Ser-136 carries an O-linked (GlcNAc) serine glycan. Tyr-159 carries the phosphotyrosine modification. Lys-233 carries the post-translational modification N6-acetyllysine.

Belongs to the peptidase T1A family. The 26S proteasome consists of a 20S proteasome core and two 19S regulatory subunits. The 20S proteasome core is a barrel-shaped complex made of 28 subunits that are arranged in four stacked rings. The two outer rings are each formed by seven alpha subunits, and the two inner rings are formed by seven beta subunits. The proteolytic activity is exerted by three beta-subunits PSMB5, PSMB6 and PSMB7. PSMA7 interacts directly with the PSMG1-PSMG2 heterodimer which promotes 20S proteasome assembly. Interacts with HIF1A. Interacts with RAB7A. Interacts with PRKN. Interacts with ABL1 and ABL2. Interacts with EMAP2. Interacts with MAVS. As to expression, ubiquitous.

It localises to the cytoplasm. It is found in the nucleus. Component of the 20S core proteasome complex involved in the proteolytic degradation of most intracellular proteins. This complex plays numerous essential roles within the cell by associating with different regulatory particles. Associated with two 19S regulatory particles, forms the 26S proteasome and thus participates in the ATP-dependent degradation of ubiquitinated proteins. The 26S proteasome plays a key role in the maintenance of protein homeostasis by removing misfolded or damaged proteins that could impair cellular functions, and by removing proteins whose functions are no longer required. Associated with the PA200 or PA28, the 20S proteasome mediates ubiquitin-independent protein degradation. This type of proteolysis is required in several pathways including spermatogenesis (20S-PA200 complex) or generation of a subset of MHC class I-presented antigenic peptides (20S-PA28 complex). Inhibits the transactivation function of HIF-1A under both normoxic and hypoxia-mimicking conditions. The interaction with EMAP2 increases the proteasome-mediated HIF-1A degradation under the hypoxic conditions. Plays a role in hepatitis C virus internal ribosome entry site-mediated translation. Mediates nuclear translocation of the androgen receptor (AR) and thereby enhances androgen-mediated transactivation. Promotes MAVS degradation and thereby negatively regulates MAVS-mediated innate immune response. The chain is Proteasome subunit alpha type-7 (Psma7) from Rattus norvegicus (Rat).